We begin with the raw amino-acid sequence, 222 residues long: Putative N-acetylmannosamine-6-phosphate 2-epimerase (222 aa).

The protein belongs to the NanE family.

It catalyses the reaction an N-acyl-D-glucosamine 6-phosphate = an N-acyl-D-mannosamine 6-phosphate. Its pathway is amino-sugar metabolism; N-acetylneuraminate degradation; D-fructose 6-phosphate from N-acetylneuraminate: step 3/5. Its function is as follows. Converts N-acetylmannosamine-6-phosphate (ManNAc-6-P) to N-acetylglucosamine-6-phosphate (GlcNAc-6-P). This Staphylococcus aureus (strain MSSA476) protein is Putative N-acetylmannosamine-6-phosphate 2-epimerase.